The sequence spans 191 residues: Small ribosomal subunit protein uS7 (191 aa).

It belongs to the universal ribosomal protein uS7 family. Part of the 30S ribosomal subunit.

Its function is as follows. One of the primary rRNA binding proteins, it binds directly to 16S rRNA where it nucleates assembly of the head domain of the 30S subunit. Is located at the subunit interface close to the decoding center. The chain is Small ribosomal subunit protein uS7 from Methanocaldococcus jannaschii (strain ATCC 43067 / DSM 2661 / JAL-1 / JCM 10045 / NBRC 100440) (Methanococcus jannaschii).